The following is a 397-amino-acid chain: Elongation factor Tu (397 aa).

The 197-residue stretch at K10–T206 folds into the tr-type G domain. Residues G19 to T26 are G1. G19 to T26 lines the GTP pocket. T26 is a Mg(2+) binding site. The tract at residues G61–S65 is G2. Residues D82–G85 are G3. Residues D82–H86 and N137–D140 each bind GTP. A G4 region spans residues N137–D140. A G5 region spans residues S175–L177.

It belongs to the TRAFAC class translation factor GTPase superfamily. Classic translation factor GTPase family. EF-Tu/EF-1A subfamily. Monomer.

It localises to the cytoplasm. It catalyses the reaction GTP + H2O = GDP + phosphate + H(+). In terms of biological role, GTP hydrolase that promotes the GTP-dependent binding of aminoacyl-tRNA to the A-site of ribosomes during protein biosynthesis. This Alkaliphilus oremlandii (strain OhILAs) (Clostridium oremlandii (strain OhILAs)) protein is Elongation factor Tu.